The sequence spans 142 residues: ATP synthase epsilon chain (142 aa).

It belongs to the ATPase epsilon chain family. As to quaternary structure, F-type ATPases have 2 components, CF(1) - the catalytic core - and CF(0) - the membrane proton channel. CF(1) has five subunits: alpha(3), beta(3), gamma(1), delta(1), epsilon(1). CF(0) has three main subunits: a, b and c.

Its subcellular location is the cell inner membrane. Its function is as follows. Produces ATP from ADP in the presence of a proton gradient across the membrane. This chain is ATP synthase epsilon chain, found in Shewanella sediminis (strain HAW-EB3).